Reading from the N-terminus, the 492-residue chain is Alpha-amylase-related protein (492 aa).

Positions Met-1–Ala-18 are cleaved as a signal peptide. Gln-19 is subject to Pyrrolidone carboxylic acid. Residues Cys-46 and Cys-102 are joined by a disulfide bond. Asn-116, Gln-167, and Asp-176 together coordinate Ca(2+). A disulfide bridge links Cys-155 with Cys-169. A chloride-binding site is contributed by Arg-204. Asp-206 (nucleophile) is an active-site residue. His-210 is a Ca(2+) binding site. Glu-243 serves as the catalytic Proton donor. Chloride-binding residues include Asn-306 and Arg-341. 3 cysteine pairs are disulfide-bonded: Cys-374–Cys-380, Cys-416–Cys-439, and Cys-446–Cys-458.

Belongs to the glycosyl hydrolase 13 family. As to quaternary structure, monomer. It depends on Ca(2+) as a cofactor. Chloride serves as cofactor.

It localises to the secreted. The enzyme catalyses Endohydrolysis of (1-&gt;4)-alpha-D-glucosidic linkages in polysaccharides containing three or more (1-&gt;4)-alpha-linked D-glucose units.. The protein is Alpha-amylase-related protein (Amyrel) of Drosophila willistoni (Fruit fly).